A 1313-amino-acid chain; its full sequence is Target of rapamycin complex 1 subunit mip1 (1313 aa).

The tract at residues 1–35 (MNDRISEVSGSSRARRSVLSYGTTETGSDRYTENS) is disordered. 3 positions are modified to phosphoserine: Ser-834, Ser-837, and Ser-882. WD repeat units lie at residues 986–1029 (TFNN…NSFK), 1033–1074 (SATT…KVEL), 1087–1126 (GDRN…CYAN), 1130–1170 (RSSN…RDSL), 1176–1216 (EHSS…SLQT), 1219–1259 (TDNS…NTFR), and 1268–1308 (PKPS…IHTD).

The protein belongs to the WD repeat RAPTOR family. In terms of assembly, the target of rapamycin complex 1 (TORC1) is composed of at least mip1, pop3/wat1, tco89, toc1 and tor2.

The protein resides in the cytoplasm. Functionally, component of TORC1, which regulates multiple cellular processes to control cell growth in response to environmental signals. Tor2 is essential for growth. Nutrient limitation and environmental stress signals cause inactivation of TORC1. Active TORC1 positively controls cell growth and ribosome biogenesis by regulating ribosomal protein gene expression. TORC1 negatively controls G1 cell-cycle arrest, sexual development and amino acid uptake. Represses mating, meiosis and sporulation efficiency by interfering with the functions of the transcription factor ste11 and the meiosis-promoting RNA-binding protein mei2. The protein is Target of rapamycin complex 1 subunit mip1 of Schizosaccharomyces pombe (strain 972 / ATCC 24843) (Fission yeast).